The sequence spans 321 residues: 4-hydroxy-2-oxoglutarate aldolase, mitochondrial (321 aa).

Residues 1–23 (MLGPQIWASMRQGLSRGLSRNVK) constitute a mitochondrion transit peptide. 71-72 (ST) is a substrate binding site. The Schiff-base intermediate with substrate role is filled by K190. Substrate is bound by residues S192 and G216.

This sequence belongs to the DapA family. In terms of assembly, homotetramer.

It is found in the mitochondrion. It carries out the reaction (4S)-4-hydroxy-2-oxoglutarate = glyoxylate + pyruvate. It catalyses the reaction (4R)-4-hydroxy-2-oxoglutarate = glyoxylate + pyruvate. With respect to regulation, inhibited by divalent cations. Catalyzes the final step in the metabolic pathway of hydroxyproline. The polypeptide is 4-hydroxy-2-oxoglutarate aldolase, mitochondrial (Hoga1) (Mus musculus (Mouse)).